The chain runs to 815 residues: DNA topoisomerase 1 (815 aa).

The Toprim domain maps to 3–119; the sequence is KHLLIVESPA…QRIVFTEITP (117 aa). E9 and D82 together coordinate Mg(2+). The region spanning 133 to 573 is the Topo IA-type catalytic domain; that stretch reads ASDLVDAQQA…KFWVPFKELV (441 aa). The segment at 167–172 is interaction with DNA; it reads SAGRVQ. Catalysis depends on Y308, which acts as the O-(5'-phospho-DNA)-tyrosine intermediate. The interval 760-815 is disordered; that stretch reads GKPARKNFSTKKTATKNETRKQTTKKRTTDAKATKKVSDKPVKKQIKKRIAPNITE. A compositionally biased stretch (basic and acidic residues) spans 774 to 801; it reads TKNETRKQTTKKRTTDAKATKKVSDKPV.

Belongs to the type IA topoisomerase family. Monomer. The cofactor is Mg(2+).

It carries out the reaction ATP-independent breakage of single-stranded DNA, followed by passage and rejoining.. Functionally, releases the supercoiling and torsional tension of DNA, which is introduced during the DNA replication and transcription, by transiently cleaving and rejoining one strand of the DNA duplex. Introduces a single-strand break via transesterification at a target site in duplex DNA. The scissile phosphodiester is attacked by the catalytic tyrosine of the enzyme, resulting in the formation of a DNA-(5'-phosphotyrosyl)-enzyme intermediate and the expulsion of a 3'-OH DNA strand. The free DNA strand then undergoes passage around the unbroken strand, thus removing DNA supercoils. Finally, in the religation step, the DNA 3'-OH attacks the covalent intermediate to expel the active-site tyrosine and restore the DNA phosphodiester backbone. The sequence is that of DNA topoisomerase 1 from Xylella fastidiosa (strain 9a5c).